Reading from the N-terminus, the 1088-residue chain is RNA-directed RNA polymerase (1088 aa).

Residues 501 to 687 form the RdRp catalytic domain; sequence LSYGDVTRFL…AKRYIAGGKI (187 aa).

This sequence belongs to the reoviridae RNA-directed RNA polymerase family. Interacts with VP3 (Potential). Interacts with VP2; this interaction activates VP1. Interacts with NSP5; this interaction is probably necessary for the formation of functional virus factories. Interacts with NSP2; this interaction is weak. Requires Mg(2+) as cofactor.

It is found in the virion. The enzyme catalyses RNA(n) + a ribonucleoside 5'-triphosphate = RNA(n+1) + diphosphate. In terms of biological role, RNA-directed RNA polymerase that is involved in both transcription and genome replication. Together with VP3 capping enzyme, forms an enzyme complex positioned near the channels situated at each of the five-fold vertices of the core. Following infection, the outermost layer of the virus is lost, leaving a double-layered particle (DLP) made up of the core and VP6 shell. VP1 then catalyzes the transcription of fully conservative plus-strand genomic RNAs that are extruded through the DLP's channels into the cytoplasm where they function as mRNAs for translation of viral proteins. One copy of each of the viral (+)RNAs is also recruited during core assembly, together with newly synthesized polymerase complexes and VP2. The polymerase of these novo-formed particles catalyzes the synthesis of complementary minus-strands leading to dsRNA formation. To do so, the polymerase specifically recognizes and binds 4 bases 5'-UGUG-3' in the conserved 3'-sequence of plus-strand RNA templates. VP2 presumably activates the autoinhibited VP1-RNA complex to coordinate packaging and genome replication. Once dsRNA synthesis is complete, the polymerase switches to the transcriptional mode, thus providing secondary transcription. This chain is RNA-directed RNA polymerase, found in Sus scrofa (Pig).